Consider the following 430-residue polypeptide: Adenylosuccinate synthetase (430 aa).

GTP-binding positions include 17–23 (GDEGKGK) and 45–47 (GHT). D18 acts as the Proton acceptor in catalysis. The Mg(2+) site is built by D18 and G45. IMP is bound by residues 18–21 (DEGK), 43–46 (NAGH), T139, R153, N229, T244, and R308. The active-site Proton donor is the H46. 304–310 (TVTGRRR) contacts substrate. Residues R310, 336–338 (KLD), and 418–420 (GVG) each bind GTP.

This sequence belongs to the adenylosuccinate synthetase family. As to quaternary structure, homodimer. It depends on Mg(2+) as a cofactor.

The protein resides in the cytoplasm. The enzyme catalyses IMP + L-aspartate + GTP = N(6)-(1,2-dicarboxyethyl)-AMP + GDP + phosphate + 2 H(+). Its pathway is purine metabolism; AMP biosynthesis via de novo pathway; AMP from IMP: step 1/2. Functionally, plays an important role in the de novo pathway and in the salvage pathway of purine nucleotide biosynthesis. Catalyzes the first committed step in the biosynthesis of AMP from IMP. The protein is Adenylosuccinate synthetase of Cryptococcus neoformans var. neoformans serotype D (strain JEC21 / ATCC MYA-565) (Filobasidiella neoformans).